Consider the following 156-residue polypeptide: MSAVLDTPVAIRRTAMDLLARREHGRVELTRKLRQRGASDELIEPELDRLAEEGLLSEARYLESFIRYRSGSGYGPSRIREELGQRGLARADIEQALRESEVDWRERMHDVWQRKFAGQRPQDPRSRAQQTRFLAYRGFPMDMIGRLLSGRDLDDY.

Belongs to the RecX family.

The protein resides in the cytoplasm. In terms of biological role, modulates RecA activity. The chain is Regulatory protein RecX from Pseudomonas putida (strain GB-1).